The primary structure comprises 369 residues: Chorismate synthase (369 aa).

Positions 48 and 54 each coordinate NADP(+). FMN is bound by residues 125 to 127 (RSS), 238 to 239 (NA), G278, 293 to 297 (KPTSS), and R319.

It belongs to the chorismate synthase family. As to quaternary structure, homotetramer. It depends on FMNH2 as a cofactor.

The enzyme catalyses 5-O-(1-carboxyvinyl)-3-phosphoshikimate = chorismate + phosphate. It functions in the pathway metabolic intermediate biosynthesis; chorismate biosynthesis; chorismate from D-erythrose 4-phosphate and phosphoenolpyruvate: step 7/7. Its function is as follows. Catalyzes the anti-1,4-elimination of the C-3 phosphate and the C-6 proR hydrogen from 5-enolpyruvylshikimate-3-phosphate (EPSP) to yield chorismate, which is the branch point compound that serves as the starting substrate for the three terminal pathways of aromatic amino acid biosynthesis. This reaction introduces a second double bond into the aromatic ring system. The chain is Chorismate synthase from Cupriavidus necator (strain ATCC 17699 / DSM 428 / KCTC 22496 / NCIMB 10442 / H16 / Stanier 337) (Ralstonia eutropha).